Reading from the N-terminus, the 347-residue chain is Quinolinate synthase (347 aa).

2 residues coordinate iminosuccinate: His-47 and Ser-68. Cys-113 contributes to the [4Fe-4S] cluster binding site. Residues 139–141 (YAN) and Ser-156 each bind iminosuccinate. Cys-200 is a binding site for [4Fe-4S] cluster. Iminosuccinate contacts are provided by residues 226–228 (HPE) and Thr-243. Cys-297 is a binding site for [4Fe-4S] cluster.

Belongs to the quinolinate synthase family. Type 1 subfamily. [4Fe-4S] cluster serves as cofactor.

It localises to the cytoplasm. The enzyme catalyses iminosuccinate + dihydroxyacetone phosphate = quinolinate + phosphate + 2 H2O + H(+). Its pathway is cofactor biosynthesis; NAD(+) biosynthesis; quinolinate from iminoaspartate: step 1/1. Its function is as follows. Catalyzes the condensation of iminoaspartate with dihydroxyacetone phosphate to form quinolinate. The sequence is that of Quinolinate synthase from Salmonella typhi.